Here is a 145-residue protein sequence, read N- to C-terminus: Bacilliredoxin BLi02578/BL01507 (145 aa).

This sequence belongs to the bacilliredoxin family.

The chain is Bacilliredoxin BLi02578/BL01507 from Bacillus licheniformis (strain ATCC 14580 / DSM 13 / JCM 2505 / CCUG 7422 / NBRC 12200 / NCIMB 9375 / NCTC 10341 / NRRL NRS-1264 / Gibson 46).